Consider the following 159-residue polypeptide: ATP synthase subunit b (159 aa).

A helical membrane pass occupies residues 8–28 (ILATIINFIILILILKHFFWD).

It belongs to the ATPase B chain family. As to quaternary structure, F-type ATPases have 2 components, F(1) - the catalytic core - and F(0) - the membrane proton channel. F(1) has five subunits: alpha(3), beta(3), gamma(1), delta(1), epsilon(1). F(0) has three main subunits: a(1), b(2) and c(10-14). The alpha and beta chains form an alternating ring which encloses part of the gamma chain. F(1) is attached to F(0) by a central stalk formed by the gamma and epsilon chains, while a peripheral stalk is formed by the delta and b chains.

The protein localises to the cell membrane. F(1)F(0) ATP synthase produces ATP from ADP in the presence of a proton or sodium gradient. F-type ATPases consist of two structural domains, F(1) containing the extramembraneous catalytic core and F(0) containing the membrane proton channel, linked together by a central stalk and a peripheral stalk. During catalysis, ATP synthesis in the catalytic domain of F(1) is coupled via a rotary mechanism of the central stalk subunits to proton translocation. In terms of biological role, component of the F(0) channel, it forms part of the peripheral stalk, linking F(1) to F(0). This Clostridium perfringens (strain ATCC 13124 / DSM 756 / JCM 1290 / NCIMB 6125 / NCTC 8237 / Type A) protein is ATP synthase subunit b.